The primary structure comprises 126 residues: RutC family protein SSO3206 (126 aa).

The protein belongs to the RutC family.

This Saccharolobus solfataricus (strain ATCC 35092 / DSM 1617 / JCM 11322 / P2) (Sulfolobus solfataricus) protein is RutC family protein SSO3206.